Reading from the N-terminus, the 1578-residue chain is Bromodomain-containing protein DDB_G0270170 (1578 aa).

Over residues 1-12 (MSLEQQDETVVE) the composition is skewed to acidic residues. 4 disordered regions span residues 1 to 39 (MSLEQQDETVVEEETKTSFETNNSTANNTNNNTDNTYKE), 108 to 127 (NNNNGDENNKDIHDSSNNTE), 151 to 285 (HYSD…AKEL), and 319 to 454 (NENI…TTQT). Residues 18–35 (SFETNNSTANNTNNNTDN) are compositionally biased toward low complexity. A compositionally biased stretch (basic and acidic residues) spans 152 to 163 (YSDDESSKEKQD). Composition is skewed to low complexity over residues 164-185 (NINSNNNNNKNKNEQIINSENI) and 197-231 (TTPSDTPPTLTNNTSSTTTTTTTNNTTTAATTTTN). Polar residues-rich tracts occupy residues 319-332 (NENIFSSSRKSTTK) and 340-351 (TASTTNTPIITA). Low complexity predominate over residues 352–383 (QQNTTPLSPTQTTTTTTTPTTTTAQQNTPAQT). The segment covering 384-395 (ESKPPTTISINI) has biased composition (polar residues). Low complexity-rich tracts occupy residues 396 to 407 (KGSKSPKTTGGK) and 417 to 433 (VVISQPVVPSTPVVATT). Over residues 443-454 (STANNNSETTQT) the composition is skewed to polar residues. Residues 479–506 (SDSATIQQLQQSISMLEDKIRLISSNNK) are a coiled coil. 2 disordered regions span residues 543–565 (FTKSSTLAPPSSERKYSNLYSDD) and 580–730 (IPIP…RMGK). Composition is skewed to low complexity over residues 604–653 (NTST…PPQQ) and 660–686 (TQQENTSSTTTTTTTTTTTTNTEDTTT). Residues 735–841 (VVLTPVFKRC…DVFEKGFPKV (107 aa)) form the Bromo domain. Residues 851–903 (KNVDQEKIEKLSNDLKNVTKELEKFKKDDSNSINNNNNNNNNYNNNNNNNNNN) adopt a coiled-coil conformation. Disordered stretches follow at residues 874–969 (KFKK…KVTT), 1039–1167 (HALP…NNNN), 1184–1452 (SIPE…TDSA), and 1480–1544 (EREE…KGNM). Low complexity-rich tracts occupy residues 881–911 (NSINNNNNNNNNYNNNNNNNNNNSSSSSSRS), 918–961 (SSGS…SSNN), and 1047–1061 (SSTHSSHSSSHDSSS). Residues 957 to 1039 (SSSNNKKYPK…QYKNGEIPQH (83 aa)) enclose the NET domain. Over residues 1064 to 1077 (REIEKLQKQLDRLG) the composition is skewed to basic and acidic residues. Residues 1092–1107 (HSKRISKPISKARGRK) show a composition bias toward basic residues. Positions 1112–1167 (SSSNLNNSSNNINNNNNNINNYNNNNNYNNNNNNNLNNNNNNNINSNLNNNLNNNN) are enriched in low complexity. Positions 1113-1150 (SSNLNNSSNNINNNNNNINNYNNNNNYNNNNNNNLNNN) form a coiled coil. Over residues 1192–1204 (TDISESSDSESDS) the composition is skewed to acidic residues. 2 stretches are compositionally biased toward low complexity: residues 1205–1218 (ESGSSDSSSSYSDS) and 1231–1334 (YNNS…SLTN). The stretch at 1280-1308 (NSNNNNSNNNNNNVNNNNNNHNNNNHNNN) forms a coiled coil. A compositionally biased stretch (polar residues) spans 1356–1369 (SVASWSFDPTNNKE). Low complexity predominate over residues 1370–1386 (SSSSSSTSSTSSTSNTT). Positions 1387 to 1399 (LTPIIQQSSLTHA) are enriched in polar residues. 2 stretches are compositionally biased toward low complexity: residues 1400 to 1424 (SSPISSSTFVSFSSSSSTPPTNNLS) and 1432 to 1451 (NSPSINSPSSPSANNNNTDS). Residues 1462 to 1544 (TLKQKEKERV…EKLNNSKGNM (83 aa)) adopt a coiled-coil conformation. The span at 1480 to 1538 (EREEKEEELKKEEEKKRIEMEEIKRLAKEKEEREAEETRKQIESERAAAREAREKEKLN) shows a compositional bias: basic and acidic residues.

The chain is Bromodomain-containing protein DDB_G0270170 from Dictyostelium discoideum (Social amoeba).